The chain runs to 337 residues: 3-isopropylmalate dehydrogenase (337 aa).

Positions 86, 96, 117, and 201 each coordinate substrate. Mg(2+) contacts are provided by aspartate 201, aspartate 225, and aspartate 229. Residue 258-270 (GAAFDIAGKNIGN) participates in NAD(+) binding.

Belongs to the isocitrate and isopropylmalate dehydrogenases family. In terms of assembly, homotetramer. It depends on Mg(2+) as a cofactor. Requires Mn(2+) as cofactor.

Its subcellular location is the cytoplasm. The catalysed reaction is (2R,3S)-3-isopropylmalate + NAD(+) = 4-methyl-2-oxopentanoate + CO2 + NADH. The protein operates within amino-acid biosynthesis; L-leucine biosynthesis; L-leucine from 3-methyl-2-oxobutanoate: step 3/4. Catalyzes the oxidation of 3-carboxy-2-hydroxy-4-methylpentanoate (3-isopropylmalate) to 3-carboxy-4-methyl-2-oxopentanoate. The product decarboxylates to 4-methyl-2 oxopentanoate. The polypeptide is 3-isopropylmalate dehydrogenase (leuB) (Sulfurisphaera tokodaii (strain DSM 16993 / JCM 10545 / NBRC 100140 / 7) (Sulfolobus tokodaii)).